The sequence spans 52 residues: UPF0391 membrane protein ACIAD3602 (52 aa).

A run of 2 helical transmembrane segments spans residues Ile-6 to Leu-26 and Phe-30 to Gly-50.

The protein belongs to the UPF0391 family.

The protein resides in the cell membrane. This chain is UPF0391 membrane protein ACIAD3602, found in Acinetobacter baylyi (strain ATCC 33305 / BD413 / ADP1).